Reading from the N-terminus, the 286-residue chain is Shikimate dehydrogenase (NADP(+)) (286 aa).

Residues Ser20–Ser22 and Thr65 each bind shikimate. Catalysis depends on Lys69, which acts as the Proton acceptor. Asp81 contributes to the NADP(+) binding site. The shikimate site is built by Asn90 and Asp105. NADP(+)-binding positions include Gly128–Ala132 and Thr217. Position 219 (Tyr219) interacts with shikimate. Gly240 contributes to the NADP(+) binding site.

Belongs to the shikimate dehydrogenase family. In terms of assembly, homodimer.

The enzyme catalyses shikimate + NADP(+) = 3-dehydroshikimate + NADPH + H(+). Its pathway is metabolic intermediate biosynthesis; chorismate biosynthesis; chorismate from D-erythrose 4-phosphate and phosphoenolpyruvate: step 4/7. Involved in the biosynthesis of the chorismate, which leads to the biosynthesis of aromatic amino acids. Catalyzes the reversible NADPH linked reduction of 3-dehydroshikimate (DHSA) to yield shikimate (SA). The protein is Shikimate dehydrogenase (NADP(+)) of Syntrophobacter fumaroxidans (strain DSM 10017 / MPOB).